Here is a 341-residue protein sequence, read N- to C-terminus: Paired box protein Pax-9 (341 aa).

The paired DNA-binding region spans 4–130 (AFGEVNQLGG…SSISRILRNK (127 aa)). The segment at 7-63 (EVNQLGGVFVNGRPLPNAIRLRIVELAQLGIRPCDISRQLRVSHGCVSKILARYNET) is PAI subdomain. The interval 82–130 (TVVKHIRTYKQRDPGIFAWEIRDRLLADGVCDKYNVPSVSSISRILRNK) is RED subdomain. The interval 168-189 (AAAAKVPTPPGVPAIPGSVAMP) is interaction with KDM5B.

As to quaternary structure, interacts with KDM5B.

The protein resides in the nucleus. Its function is as follows. Transcription factor required for normal development of thymus, parathyroid glands, ultimobranchial bodies, teeth, skeletal elements of skull and larynx as well as distal limbs. This chain is Paired box protein Pax-9 (PAX9), found in Perodicticus potto edwarsi (Potto).